The sequence spans 443 residues: GTPase Der (443 aa).

2 EngA-type G domains span residues 3–167 and 176–349; these read PTLV…PEPE and VRVA…AAAM. GTP contacts are provided by residues 9-16, 56-60, 119-122, 182-189, 229-233, and 294-297; these read GRPNVGKS, DTGGF, NKAE, DTAGM, and NKWD. In terms of domain architecture, KH-like spans 350-434; the sequence is AKMTTPRLTR…PLRIQFVTAK (85 aa).

It belongs to the TRAFAC class TrmE-Era-EngA-EngB-Septin-like GTPase superfamily. EngA (Der) GTPase family. As to quaternary structure, associates with the 50S ribosomal subunit.

In terms of biological role, GTPase that plays an essential role in the late steps of ribosome biogenesis. This chain is GTPase Der, found in Dechloromonas aromatica (strain RCB).